Consider the following 726-residue polypeptide: Methionine--tRNA ligase (726 aa).

A 'HIGH' region motif is present at residues 12-22 (PYVNNIPHLGN). 4 residues coordinate Zn(2+): C143, C146, C155, and C158. The 'KMSKS' region motif lies at 330 to 334 (KFSKS). K333 provides a ligand contact to ATP. The region spanning 562–667 (FSEQICLKTV…DNPIPGERVI (106 aa)) is the tRNA-binding domain.

The protein belongs to the class-I aminoacyl-tRNA synthetase family. MetG type 1 subfamily. In terms of assembly, homodimer. Requires Zn(2+) as cofactor.

It is found in the cytoplasm. It catalyses the reaction tRNA(Met) + L-methionine + ATP = L-methionyl-tRNA(Met) + AMP + diphosphate. Its function is as follows. Is required not only for elongation of protein synthesis but also for the initiation of all mRNA translation through initiator tRNA(fMet) aminoacylation. The polypeptide is Methionine--tRNA ligase (Borrelia recurrentis (strain A1)).